The chain runs to 119 residues: uncharacterized protein (119 aa).

Transmembrane regions (helical) follow at residues 3–23, 29–49, 58–78, and 87–107; these read WVFL…MKLS, LIPS…LTLT, AYAV…FLFF, and VISI…EHVA.

Belongs to the drug/metabolite transporter (DMT) superfamily. Small multidrug resistance (SMR) (TC 2.A.7.1) family.

The protein localises to the cell membrane. This is an uncharacterized protein from Bacillus subtilis (strain 168).